The primary structure comprises 596 residues: Elongation factor 4 (596 aa).

Positions 2–184 constitute a tr-type G domain; that stretch reads KNIRNFAIIA…SIVKYIPPPE (183 aa). Residues 14–19 and 131–134 contribute to the GTP site; these read DHGKST and NKID.

The protein belongs to the TRAFAC class translation factor GTPase superfamily. Classic translation factor GTPase family. LepA subfamily.

Its subcellular location is the cell inner membrane. It carries out the reaction GTP + H2O = GDP + phosphate + H(+). In terms of biological role, required for accurate and efficient protein synthesis under certain stress conditions. May act as a fidelity factor of the translation reaction, by catalyzing a one-codon backward translocation of tRNAs on improperly translocated ribosomes. Back-translocation proceeds from a post-translocation (POST) complex to a pre-translocation (PRE) complex, thus giving elongation factor G a second chance to translocate the tRNAs correctly. Binds to ribosomes in a GTP-dependent manner. This chain is Elongation factor 4, found in Neorickettsia sennetsu (strain ATCC VR-367 / Miyayama) (Ehrlichia sennetsu).